A 612-amino-acid polypeptide reads, in one-letter code: uncharacterized protein (612 aa).

Disordered stretches follow at residues 46–113, 129–185, 313–360, 457–488, and 593–612; these read QQPQ…MVTP, QQYQ…TPTY, TKDG…GSTM, FSIS…SGYG, and NNTN…VVTI. Residues 58–102 are compositionally biased toward low complexity; sequence HQQIPISTQSTPNSTSSTTTTTTTTTSTTTAPTSNSKKSKTTPSN. Polar residues-rich tracts occupy residues 103–113 and 129–138; these read GNKPTSGMVTP and QQYQPNSQLQ. The segment covering 143–169 has biased composition (low complexity); that stretch reads IIKKSSLSTTPNNINNNNNNNNNTNTI. Polar residues predominate over residues 175-185; that stretch reads GGNNSAPTPTY. Residues 323-359 show a composition bias toward low complexity; the sequence is TTSSTSTSSSATSTTSSSTSSTTTTSSTSNSSTPGST.

This is an uncharacterized protein from Dictyostelium discoideum (Social amoeba).